The chain runs to 122 residues: Small ribosomal subunit protein uS13 (122 aa).

The tract at residues 95–122 (GLPVRGQRTKTNARTRKGPKKTIAGKKK) is disordered.

This sequence belongs to the universal ribosomal protein uS13 family. Part of the 30S ribosomal subunit. Forms a loose heterodimer with protein S19. Forms two bridges to the 50S subunit in the 70S ribosome.

Its function is as follows. Located at the top of the head of the 30S subunit, it contacts several helices of the 16S rRNA. In the 70S ribosome it contacts the 23S rRNA (bridge B1a) and protein L5 of the 50S subunit (bridge B1b), connecting the 2 subunits; these bridges are implicated in subunit movement. Contacts the tRNAs in the A and P-sites. The polypeptide is Small ribosomal subunit protein uS13 (Corynebacterium aurimucosum (strain ATCC 700975 / DSM 44827 / CIP 107346 / CN-1) (Corynebacterium nigricans)).